The primary structure comprises 60 residues: Cytotoxin 1 (60 aa).

Cystine bridges form between C3-C21, C14-C38, C42-C53, and C54-C59.

Belongs to the three-finger toxin family. Short-chain subfamily. Type IA cytotoxin sub-subfamily. As to quaternary structure, monomer in solution; Homodimer and oligomer in the presence of negatively charged lipids forming a pore with a size ranging between 20 and 30 Angstroms. As to expression, expressed by the venom gland.

It localises to the secreted. The protein resides in the target cell membrane. Shows cytolytic activity on many different cells by forming pore in lipid membranes. In vivo, increases heart rate or kills the animal by cardiac arrest. In addition, it binds to heparin with high affinity, interacts with Kv channel-interacting protein 1 (KCNIP1) in a calcium-independent manner, and binds to integrin alpha-V/beta-3 (ITGAV/ITGB3) with moderate affinity. The chain is Cytotoxin 1 from Naja melanoleuca (Forest cobra).